Reading from the N-terminus, the 291-residue chain is Acetylglutamate kinase (291 aa).

Substrate is bound by residues 65-66, R87, and N186; that span reads GG.

Belongs to the acetylglutamate kinase family. ArgB subfamily.

It localises to the cytoplasm. The enzyme catalyses N-acetyl-L-glutamate + ATP = N-acetyl-L-glutamyl 5-phosphate + ADP. It participates in amino-acid biosynthesis; L-arginine biosynthesis; N(2)-acetyl-L-ornithine from L-glutamate: step 2/4. Functionally, catalyzes the ATP-dependent phosphorylation of N-acetyl-L-glutamate. This Mycolicibacterium vanbaalenii (strain DSM 7251 / JCM 13017 / BCRC 16820 / KCTC 9966 / NRRL B-24157 / PYR-1) (Mycobacterium vanbaalenii) protein is Acetylglutamate kinase.